The chain runs to 498 residues: Flavin-dependent halogenase otaD (498 aa).

Residues glycine 14, glycine 17, and glutamate 47 each contribute to the FAD site. 2 residues coordinate chloride: serine 326 and glycine 327. Valine 328 contacts FAD.

The protein belongs to the flavin-dependent halogenase family.

The catalysed reaction is ochratoxin B + FADH2 + chloride + O2 = ochratoxin A + FAD + 2 H2O. It functions in the pathway mycotoxin biosynthesis. In terms of biological role, flavin-dependent halogenase; part of the gene cluster that mediates the biosynthesis of ochratoxin A (OTA), a mycotoxin composed of a chlorinated type I polyketide dihydroisocoumarin moiety linked to L-phenylalanine, and demonstrated to have nephrotoxic, immunotoxic, genotoxic, neurotoxic, and teratogenic properties. OtaD chlorinates ochratoxin B (OTB) at the C-5 position to form OTA. The pathway begins with the highly reducing polyketide synthase otaA that catalyzes the formation of the isocoumarin group during the initial stages of biosynthesis, starting from one acetate and 4 malonate units, to originate the characteristic pentaketide skeleton 7-methylmellein (7-MM) of the OTA molecule. The newly identified cyclase otaY might be involved in the polyketide cyclization reaction during the initial steps of the OTA biosynthesis. 7-MM is then oxidized into 7-carboxymellein (also called ochratoxin beta) by the cytochrome P450 monooxygenase otaC. The NRPS encoded by the otaB gene is involved in the linking of phenylalanine to the dihydroisocoumarin ring. The reaction catalyzed by NRPS results in the production of ochratoxin B (OTB), which is the non-chlorinated analog of OTA and which subsequently serves as the substrate of the halogenase otaD for chlorination activity to form the final molecular structure of OTA, containing a chlorine atom in the C-5 position of the molecule. This Aspergillus carbonarius (strain ITEM 5010) protein is Flavin-dependent halogenase otaD.